The sequence spans 250 residues: MASLRIEVISLFPEMFSAISEYGITSRAVKQGLLQLTCWNPRDYTTDRHHTVDDRPFGGGPGMVMKIKPLEDALVQARQAAGDAAKVIYLSPQGRQLNQAAVRELAQEEAIILIAGRYEGIDERFIEAHVDEEWSIGDYVLSGGELPAMVLIDAVTRLLPGALGHVDSAEEDSFTDGLLDCPHYTRPEVYADQRVPDVLLSGNHAHIRRWRLQQSLGRTYERRADLLESRSLSGEEKKLLAEYIRERDDS.

S-adenosyl-L-methionine contacts are provided by residues glycine 116 and 136-141 (IGDYVL).

This sequence belongs to the RNA methyltransferase TrmD family. In terms of assembly, homodimer.

Its subcellular location is the cytoplasm. It catalyses the reaction guanosine(37) in tRNA + S-adenosyl-L-methionine = N(1)-methylguanosine(37) in tRNA + S-adenosyl-L-homocysteine + H(+). Its function is as follows. Specifically methylates guanosine-37 in various tRNAs. The sequence is that of tRNA (guanine-N(1)-)-methyltransferase from Pseudomonas syringae pv. tomato (strain ATCC BAA-871 / DC3000).